The following is an 850-amino-acid chain: Bifunctional levopimaradiene synthase, chloroplastic (850 aa).

The transit peptide at 1–52 directs the protein to the chloroplast; that stretch reads MALPSSSLSSQIHTGATTQCIPHFHGSLNAGTSAGKRRSLYLRWGKGPSKIV. Lys250 contributes to the substrate binding site. Mg(2+) contacts are provided by Asp383 and Asp385. The short motif at 383–386 is the DXDD motif element; the sequence is DIDD. Lys470 is a substrate binding site. Mg(2+)-binding residues include Asp602, Asp606, Asn746, Thr750, and Glu754. The DDXXD motif signature appears at 602–606; sequence DDLYD.

The protein belongs to the terpene synthase family. Tpsd subfamily. Requires Mg(2+) as cofactor.

Its subcellular location is the plastid. It is found in the chloroplast. The enzyme catalyses (2E,6E,10E)-geranylgeranyl diphosphate = (+)-copalyl diphosphate. The catalysed reaction is (+)-copalyl diphosphate = abieta-7,13-diene + diphosphate. It catalyses the reaction (+)-copalyl diphosphate = abieta-8(14),12-diene + diphosphate. It carries out the reaction (+)-copalyl diphosphate = neoabietadiene + diphosphate. Its pathway is terpene metabolism; oleoresin biosynthesis. Its function is as follows. Involved in defensive oleoresin formation in conifers in response to insect attack or other injury. Involved in diterpene (C20) olefins biosynthesis. Bifunctional enzyme that catalyzes two sequential cyclizations of geranylgeranyl diphosphate (GGPP) to levopimaradiene. Levopimaradiene is the major products of the enzyme with abietadiene and neoabietadiene. No activity with farnesyl diphosphate (FPP) as substrate. This chain is Bifunctional levopimaradiene synthase, chloroplastic, found in Pinus contorta (Shore pine).